A 397-amino-acid polypeptide reads, in one-letter code: UPF0261 protein mlr3387 (397 aa).

This sequence belongs to the UPF0261 family.

This chain is UPF0261 protein mlr3387, found in Mesorhizobium japonicum (strain LMG 29417 / CECT 9101 / MAFF 303099) (Mesorhizobium loti (strain MAFF 303099)).